Reading from the N-terminus, the 2512-residue chain is Fatty acid synthase (2512 aa).

Glu-2 bears the N-acetylglutamate mark. A Ketosynthase family 3 (KS3) domain is found at 2–406 (EDVVIAGIAG…GSNAHVILRP (405 aa)). Residues Cys-161, His-293, and His-331 each act as for beta-ketoacyl synthase activity in the active site. An acyl and malonyl transferases region spans residues 427 to 815 (GRTQEAVEIL…GINVLGNNLF (389 aa)). Residue Ser-580 is the For acyl/malonyl transferase activity of the active site. Residues 646–647 (DT), Phe-670, and Arg-772 contribute to the an acyl-CoA site. The N-terminal hotdog fold stretch occupies residues 844-967 (PKAEDFPSGS…ISLLENDALK (124 aa)). One can recognise a PKS/mFAS DH domain in the interval 844 to 1111 (PKAEDFPSGS…ASVAPRRQQE (268 aa)). Residue His-878 is the Proton acceptor; for dehydratase activity of the active site. Residues 984-1111 (AKSGLLMEDV…ASVAPRRQQE (128 aa)) form a C-terminal hotdog fold region. Asp-1034 (proton donor; for dehydratase activity) is an active-site residue. Cys-1475 is modified (S-nitrosocysteine). The tract at residues 1638–1866 (WEVPENWTLE…MIKIQEEEKQ (229 aa)) is enoyl reductase. 1675-1692 (VLIHSGSGGVGQAAIAIA) is a binding site for NADP(+). Lys-1708 carries the post-translational modification N6-(pyridoxal phosphate)lysine. The beta-ketoacyl reductase stretch occupies residues 1867–2119 (YPLRSEPVKL…SFVLAEKVSV (253 aa)). Residue 1889 to 1904 (SYIITGGLGGFGLELA) participates in NADP(+) binding. Cys-2093 is modified (S-nitrosocysteine). In terms of domain architecture, Carrier spans 2120–2200 (KSEGGSQRDL…ELSSKTGTAE (81 aa)). Ser-2158 carries the O-(pantetheine 4'-phosphoryl)serine modification. The interval 2209 to 2511 (KTGPGEPPKL…LAEPRVSVRE (303 aa)) is thioesterase. Catalysis depends on for thioesterase activity residues Ser-2309 and His-2482.

Homodimer which is arranged in a head to tail fashion. In terms of processing, S-nitrosylation of Fatty acid synthase at cysteine residues Cys-1475 or Cys-2093 is important for the enzyme dimerization. In adipocytes, S-nitrosylation of Fatty acid synthase occurs under physiological conditions and gradually increases during adipogenesis.

The catalysed reaction is acetyl-CoA + n malonyl-CoA + 2n NADPH + 2n H(+) = a long-chain fatty acid + (n+1) CoA + n CO2 + 2n NADP(+).. The enzyme catalyses holo-[ACP] + acetyl-CoA = acetyl-[ACP] + CoA. It carries out the reaction holo-[ACP] + malonyl-CoA = malonyl-[ACP] + CoA. It catalyses the reaction a fatty acyl-[ACP] + malonyl-[ACP] + H(+) = a 3-oxoacyl-[ACP] + holo-[ACP] + CO2. The catalysed reaction is a (3R)-hydroxyacyl-[ACP] + NADP(+) = a 3-oxoacyl-[ACP] + NADPH + H(+). The enzyme catalyses a (3R)-hydroxyacyl-[ACP] = a (2E)-enoyl-[ACP] + H2O. It carries out the reaction a 2,3-saturated acyl-[ACP] + NADP(+) = a (2E)-enoyl-[ACP] + NADPH + H(+). It catalyses the reaction hexadecanoyl-[ACP] + H2O = hexadecanoate + holo-[ACP] + H(+). The catalysed reaction is acetyl-[ACP] + malonyl-[ACP] + H(+) = 3-oxobutanoyl-[ACP] + holo-[ACP] + CO2. The enzyme catalyses 3-oxobutanoyl-[ACP] + NADPH + H(+) = (3R)-hydroxybutanoyl-[ACP] + NADP(+). It carries out the reaction (3R)-hydroxybutanoyl-[ACP] = (2E)-butenoyl-[ACP] + H2O. It catalyses the reaction (2E)-butenoyl-[ACP] + NADPH + H(+) = butanoyl-[ACP] + NADP(+). The catalysed reaction is butanoyl-[ACP] + malonyl-[ACP] + H(+) = 3-oxohexanoyl-[ACP] + holo-[ACP] + CO2. The enzyme catalyses 3-oxohexanoyl-[ACP] + NADPH + H(+) = (3R)-hydroxyhexanoyl-[ACP] + NADP(+). It carries out the reaction (3R)-hydroxyhexanoyl-[ACP] = (2E)-hexenoyl-[ACP] + H2O. It catalyses the reaction (2E)-hexenoyl-[ACP] + NADPH + H(+) = hexanoyl-[ACP] + NADP(+). The catalysed reaction is hexanoyl-[ACP] + malonyl-[ACP] + H(+) = 3-oxooctanoyl-[ACP] + holo-[ACP] + CO2. The enzyme catalyses 3-oxooctanoyl-[ACP] + NADPH + H(+) = (3R)-hydroxyoctanoyl-[ACP] + NADP(+). It carries out the reaction (3R)-hydroxyoctanoyl-[ACP] = (2E)-octenoyl-[ACP] + H2O. It catalyses the reaction (2E)-octenoyl-[ACP] + NADPH + H(+) = octanoyl-[ACP] + NADP(+). The catalysed reaction is octanoyl-[ACP] + malonyl-[ACP] + H(+) = 3-oxodecanoyl-[ACP] + holo-[ACP] + CO2. The enzyme catalyses 3-oxodecanoyl-[ACP] + NADPH + H(+) = (3R)-hydroxydecanoyl-[ACP] + NADP(+). It carries out the reaction (3R)-hydroxydecanoyl-[ACP] = (2E)-decenoyl-[ACP] + H2O. It catalyses the reaction (2E)-decenoyl-[ACP] + NADPH + H(+) = decanoyl-[ACP] + NADP(+). The catalysed reaction is decanoyl-[ACP] + malonyl-[ACP] + H(+) = 3-oxododecanoyl-[ACP] + holo-[ACP] + CO2. The enzyme catalyses 3-oxododecanoyl-[ACP] + NADPH + H(+) = (3R)-hydroxydodecanoyl-[ACP] + NADP(+). It carries out the reaction (3R)-hydroxydodecanoyl-[ACP] = (2E)-dodecenoyl-[ACP] + H2O. It catalyses the reaction (2E)-dodecenoyl-[ACP] + NADPH + H(+) = dodecanoyl-[ACP] + NADP(+). The catalysed reaction is dodecanoyl-[ACP] + malonyl-[ACP] + H(+) = 3-oxotetradecanoyl-[ACP] + holo-[ACP] + CO2. The enzyme catalyses 3-oxotetradecanoyl-[ACP] + NADPH + H(+) = (3R)-hydroxytetradecanoyl-[ACP] + NADP(+). It carries out the reaction (3R)-hydroxytetradecanoyl-[ACP] = (2E)-tetradecenoyl-[ACP] + H2O. It catalyses the reaction (2E)-tetradecenoyl-[ACP] + NADPH + H(+) = tetradecanoyl-[ACP] + NADP(+). The catalysed reaction is tetradecanoyl-[ACP] + malonyl-[ACP] + H(+) = 3-oxohexadecanoyl-[ACP] + holo-[ACP] + CO2. The enzyme catalyses 3-oxohexadecanoyl-[ACP] + NADPH + H(+) = (3R)-hydroxyhexadecanoyl-[ACP] + NADP(+). It carries out the reaction (3R)-hydroxyhexadecanoyl-[ACP] = (2E)-hexadecenoyl-[ACP] + H2O. It catalyses the reaction (2E)-hexadecenoyl-[ACP] + NADPH + H(+) = hexadecanoyl-[ACP] + NADP(+). The catalysed reaction is hexadecanoyl-[ACP] + malonyl-[ACP] + H(+) = 3-oxooctadecanoyl-[ACP] + holo-[ACP] + CO2. The enzyme catalyses 3-oxooctadecanoyl-[ACP] + NADPH + H(+) = (3R)-hydroxyoctadecanoyl-[ACP] + NADP(+). It carries out the reaction (3R)-hydroxyoctadecanoyl-[ACP] = (2E)-octadecenoyl-[ACP] + H2O. It catalyses the reaction (2E)-octadecenoyl-[ACP] + NADPH + H(+) = octadecanoyl-[ACP] + NADP(+). The catalysed reaction is tetradecanoyl-[ACP] + H2O = tetradecanoate + holo-[ACP] + H(+). The enzyme catalyses octadecanoyl-[ACP] + H2O = octadecanoate + holo-[ACP] + H(+). Its pathway is lipid metabolism; fatty acid biosynthesis. Cerulenin, a potent non-competitive pharmacological inhibitor of FAS, binds covalently to the active site of the condensing enzyme region, inactivating a key enzyme step in fatty acid synthesis. Fatty acid synthetase is a multifunctional enzyme that catalyzes the de novo biosynthesis of long-chain saturated fatty acids starting from acetyl-CoA and malonyl-CoA in the presence of NADPH. This multifunctional protein contains 7 catalytic activities and a site for the binding of the prosthetic group 4'-phosphopantetheine of the acyl carrier protein ([ACP]) domain. The protein is Fatty acid synthase (FASN) of Gallus gallus (Chicken).